The sequence spans 163 residues: MASHQDQSYKAGEPKGHAQEKTGQMADTMKDKAQAAKDKASEMAGSARDRTVESKDQTGSYVSDKAGAVKDKTCETAQAAKEKTGGAMQATKEKASEMGESAKETAVAGKEKTGGLMSSAAEQVKGMAQGATEAVKNTFGMAGADEEEKTTTTRVTRSSARTE.

Disordered regions lie at residues methionine 1 to methionine 117 and phenylalanine 139 to glutamate 163. Composition is skewed to basic and acidic residues over residues threonine 28–aspartate 56, glycine 67–threonine 84, and threonine 91–threonine 113. Tandem repeats lie at residues lysine 32–glutamate 42, methionine 43–glutamate 53, lysine 65–glutamate 75, threonine 76–glycine 86, alanine 87–glutamate 97, and lysine 103–glycine 115. The segment at lysine 32–glycine 115 is 6 X 11 AA approximate repeats. Over residues threonine 152–glutamate 163 the composition is skewed to low complexity.

The protein belongs to the LEA type 4 family.

The protein is Late embryogenesis abundant protein Dc3 of Daucus carota (Wild carrot).